The following is a 20-amino-acid chain: Unknown protein NF015 from 2D-PAGE (20 aa).

Residues 1-20 are disordered; it reads TPQIQKPAPQFSKTALLPDE.

This Naegleria fowleri (Brain eating amoeba) protein is Unknown protein NF015 from 2D-PAGE.